The primary structure comprises 712 residues: DNA ligase (712 aa).

Positions 1–22 (MSTQYDSDSSPAASNSGSADPA) are enriched in low complexity. Residues 1–23 (MSTQYDSDSSPAASNSGSADPAL) form a disordered region. 53–57 (DAEFD) provides a ligand contact to NAD(+). The disordered stretch occupies residues 69–93 (SHPEAVTGPSPTTEVAPSPPESSPF). Residues 104–105 (SL) and E129 contribute to the NAD(+) site. Residue K131 is the N6-AMP-lysine intermediate of the active site. The NAD(+) site is built by R152, E192, K308, and K332. Zn(2+)-binding residues include C426, C429, C445, and C451. Residues 624–712 (IQADLLAGLS…GPGKGDAEED (89 aa)) form the BRCT domain.

This sequence belongs to the NAD-dependent DNA ligase family. LigA subfamily. Mg(2+) is required as a cofactor. It depends on Mn(2+) as a cofactor.

It catalyses the reaction NAD(+) + (deoxyribonucleotide)n-3'-hydroxyl + 5'-phospho-(deoxyribonucleotide)m = (deoxyribonucleotide)n+m + AMP + beta-nicotinamide D-nucleotide.. In terms of biological role, DNA ligase that catalyzes the formation of phosphodiester linkages between 5'-phosphoryl and 3'-hydroxyl groups in double-stranded DNA using NAD as a coenzyme and as the energy source for the reaction. It is essential for DNA replication and repair of damaged DNA. The sequence is that of DNA ligase from Corynebacterium urealyticum (strain ATCC 43042 / DSM 7109).